The primary structure comprises 592 residues: MQLFIVKLDSRSSASNEILVLDINELRKYVSKHQLSFRGAQVHETNSEHSVRNWEDDNITMFFHTSNVFPSEKSVRHALFSRNSVHVCGPLNIGAFRDSLRVLQSPQFPIHTYGDDITVFDKLREFVVVPNSLAVVDMDTSAWERYTYSLFTDEPGTITLADETPPTISPTGRDSVSPVARFSPSISISSIAIGEVGSASKRRQRLVKQAKSSDKTPIPEIRLNKKDTVFAETGTEQASPKTEIVAATVHKIPVNHAEADKRVVVLKGRTKDKAQEVREVTSLARDTTGVEHELMQSVGDDSVQVSGELSGFGDESFEVSKTDVVGVENKQLALDRVPALEPCGEVSEDEELVSEGMYAVPLDLDIYAEKCPSPTPPNSPKKREKADHEPIDISSAMMKLRLIAAAFQKEMMAYDKIDCLSSDDPAYLLAQFCLRNLNGVFVPEYVEEHSSDEENADDPNQGWNGTPVHGSREIFEKLSESRLASMEMISNVKPIRWNSKKTTYAVTIERGNPNLIVTQSLTRGQSSQFRKVIRAFGCSTDYCLERLASRDYDAILMLMSSLSGACHATKSYCYLQIVAYGSFAAPECKELD.

Positions 450-469 (SSDEENADDPNQGWNGTPVH) are disordered.

It is found in the host cell junction. It localises to the host plasmodesma. Its function is as follows. Transports viral genome to neighboring plant cells directly through plasmosdesmata, without any budding. The movement protein allows efficient cell to cell propagation, by bypassing the host cell wall barrier. Displays sequence non-specific nucleic acid binding activity. Acts as a suppressor of RNA-mediated gene silencing, also known as post-transcriptional gene silencing (PTGS), a mechanism of plant viral defense that limits the accumulation of viral RNAs. This is Movement and RNA silencing protein VP6 from Oryza latifolia (Indian wild rice).